The primary structure comprises 259 residues: DNA-directed RNA polymerase 30 kDa polypeptide (259 aa).

Residues 155–195 form a TFIIS-type zinc finger; the sequence is YNTPCPNCKSRNTTPMMIQTRAADEPPLVRHACRDCKQHFK. The Zn(2+) site is built by cysteine 159, cysteine 162, cysteine 187, and cysteine 190. Residues 214 to 259 form a disordered region; that stretch reads ENKEITEILPDNNPSPPESPEPASPIDDGLIRSTFDRNDEPPEDDE. The span at 226–236 shows a compositional bias: pro residues; it reads NPSPPESPEPA.

The protein belongs to the poxviridae DNA-directed RNA polymerase 30 kDa subunit family. The DNA-dependent RNA polymerase (vRNAP) consists of eight subunits encoded by early viral genes and termed according to their apparent molecular masses Rpo147, Rpo132, Rpo35, Rpo30, Rpo22, Rpo19, Rpo18, and Rpo7. The same holoenzyme, with the addition of the transcription-specificity factor RAP94, is used for early gene expression.

The protein resides in the virion. It localises to the host cytoplasm. It catalyses the reaction RNA(n) + a ribonucleoside 5'-triphosphate = RNA(n+1) + diphosphate. In terms of biological role, part of the DNA-dependent RNA polymerase which catalyzes the transcription of viral DNA into RNA using the four ribonucleoside triphosphates as substrates. Responsible for the transcription of early, intermediate and late genes. DNA-dependent RNA polymerase associates with the early transcription factor (ETF), itself composed of OPG118/D6 and OPG134/A8, thereby allowing the early genes transcription. Late transcription, and probably also intermediate transcription, require newly synthesized RNA polymerase. The protein is DNA-directed RNA polymerase 30 kDa polypeptide (OPG066) of Homo sapiens (Human).